Reading from the N-terminus, the 183-residue chain is Small ribosomal subunit protein uS4c (183 aa).

An S4 RNA-binding domain is found at 82 to 143; sequence MRLDNILFRL…KQRSKALIQN (62 aa).

It belongs to the universal ribosomal protein uS4 family. As to quaternary structure, part of the 30S ribosomal subunit. Contacts protein S5. The interaction surface between S4 and S5 is involved in control of translational fidelity.

The protein resides in the plastid. Its subcellular location is the chloroplast. In terms of biological role, one of the primary rRNA binding proteins, it binds directly to 16S rRNA where it nucleates assembly of the body of the 30S subunit. With S5 and S12 plays an important role in translational accuracy. The protein is Small ribosomal subunit protein uS4c (rps4) of Aristea capitata.